Here is a 754-residue protein sequence, read N- to C-terminus: Protein NUCLEOLAR FACTOR 1 (754 aa).

Disordered stretches follow at residues 1–56 (MAPN…EAMV), 69–166 (SLGS…ELST), and 390–413 (EDTD…QKSS). The span at 42-52 (SPEESSIEAES) shows a compositional bias: acidic residues. Residues 80–93 (MNKRRQREEEGKSD) show a composition bias toward basic and acidic residues. Acidic residues-rich tracts occupy residues 94-110 (TEED…ENSG) and 138-161 (DTQE…DEEV). Over residues 402–413 (SKNGNSIKQKSS) the composition is skewed to polar residues.

The protein belongs to the UTP25 family. Component of the ribosomal small subunit (SSU) processome composed of at least 40 protein subunits and snoRNA U3. Interacts with THAL in the nucleus. As to expression, preferentially expressed in differentiating cells in young tissues such as floral buds, ovules, embryos, secondary roots, pollen, young seedlings and vascular bundles. Observed ubiquitously.

The protein localises to the nucleus. The protein resides in the nucleolus. In terms of biological role, DEAD-box RNA helicase-like protein required for pre-18S rRNA processing, specifically at sites A0, A1, and A2. Involved in the control of rRNA expression. Required for embryo development and female gametogenesis. This is Protein NUCLEOLAR FACTOR 1 from Arabidopsis thaliana (Mouse-ear cress).